We begin with the raw amino-acid sequence, 320 residues long: MRQTKIGILLANLGTPDAPTPEAVKRYLKQFLSDRRVVDTSRLLWWPLLRGVILPLRSPRVAKLYASVWMEGGSPLMVYSRQQQQALAQRLPETPVALGMSYGSPSLESAVDELLAEHVDHIVVLPLYPQFSCSTVGAVWDELARILARKRSIPGISFIRDYADNHDYINALANSVRASFAKHGEPDLLLLSYHGIPQRYADEGDDYPQRCRTTTRELASALGMAPEKVMMTFQSRFGREPWLMPYTDETLKMLGEKGVGHIQVMCPGFAADCLETLEEIAEQNREVFLGAGGKKYEYIPALNATPEHIEMMANLVAAYR.

Fe cation contacts are provided by His194 and Glu275.

The protein belongs to the ferrochelatase family. As to quaternary structure, monomer.

The protein resides in the cytoplasm. It carries out the reaction heme b + 2 H(+) = protoporphyrin IX + Fe(2+). It participates in porphyrin-containing compound metabolism; protoheme biosynthesis; protoheme from protoporphyrin-IX: step 1/1. In terms of biological role, catalyzes the ferrous insertion into protoporphyrin IX. In Shigella sonnei (strain Ss046), this protein is Ferrochelatase.